Consider the following 358-residue polypeptide: Dynein axonemal assembly factor 10 (358 aa).

WD repeat units lie at residues 63–105 (EKKH…QPVF), 109–154 (AHAS…APVA), 162–205 (NNVR…VRWE), 207–249 (NVRN…PKKG), 258–298 (TAGA…QRKV), and 320–358 (ISTQPVAGFDWSPDKEGLFACVAFDQAVRVGIVTKLNKV).

In terms of assembly, interacts with PIH1D1; the interaction associates DNAAF10 with the R2TP complex. Interacts with several dynein axonemal assembly factors.

It is found in the dynein axonemal particle. In terms of biological role, key assembly factor specifically required for the stability of axonemal dynein heavy chains in cytoplasm. This is Dynein axonemal assembly factor 10 (dnaaf10) from Chlamydomonas reinhardtii (Chlamydomonas smithii).